Reading from the N-terminus, the 859-residue chain is Tripartite terminase subunit 1 (859 aa).

The segment at 231 to 259 (CCICLDELSVTANQGDTIYKRLGYSVCDH) adopts a C3H1-type zinc-finger fold. Positions 512 to 525 (TRPRADKAGGRAED) are enriched in basic and acidic residues. The interval 512–542 (TRPRADKAGGRAEDGAGDCDDEGYPGAADAT) is disordered. ATP is bound at residue 782 to 789 (FESIFQCG).

This sequence belongs to the herpesviridae TRM1 protein family. Associates with TRM2 and TRM3 to form the tripartite terminase complex. Interacts with portal protein.

Its subcellular location is the host nucleus. Its function is as follows. Component of the molecular motor that translocates viral genomic DNA in empty capsid during DNA packaging. Forms a tripartite terminase complex together with TRM2 and TRM3 in the host cytoplasm. Once the complex reaches the host nucleus, it interacts with the capsid portal vertex. This portal forms a ring in which genomic DNA is translocated into the capsid. TRM1 carries an endonuclease activity that plays an important role for the cleavage of concatemeric viral DNA into unit length genomes. This chain is Tripartite terminase subunit 1, found in Amazona oratrix (yellow-headed parrot).